Consider the following 600-residue polypeptide: Prostaglandin G/H synthase 1 (600 aa).

The signal sequence occupies residues 1-24; that stretch reads MSRQGISLRFPLLLLLLSPSPVLP. One can recognise an EGF-like domain in the interval 32–70; sequence PVNPCCYYPCQHQGICVRFGLDRYQCDCTRTGYYGPNCT. 4 disulfide bridges follow: C36–C47, C37–C159, C41–C57, and C59–C69. 3 N-linked (GlcNAc...) asparagine glycosylation sites follow: N68, N104, and N144. Residue H207 is the Proton acceptor of the active site. Residue Y385 is the For cyclooxygenase activity of the active site. H388 serves as a coordination point for heme b. N-linked (GlcNAc...) asparagine glycosylation occurs at N410. An intrachain disulfide couples C569 to C575.

It belongs to the prostaglandin G/H synthase family. As to quaternary structure, homodimer. Heme b is required as a cofactor.

The protein localises to the microsome membrane. Its subcellular location is the endoplasmic reticulum membrane. It catalyses the reaction (5Z,8Z,11Z,14Z)-eicosatetraenoate + AH2 + 2 O2 = prostaglandin H2 + A + H2O. The catalysed reaction is (5Z,8Z,11Z,14Z)-eicosatetraenoate + 2 O2 = prostaglandin G2. The enzyme catalyses prostaglandin G2 + AH2 = prostaglandin H2 + A + H2O. It carries out the reaction (9Z,12Z)-octadecadienoate + AH2 + O2 = (9R)-hydroxy-(10E,12Z)-octadecadienoate + A + H2O. It catalyses the reaction (9Z,12Z)-octadecadienoate + AH2 + O2 = (9S)-hydroxy-(10E,12Z)-octadecadienoate + A + H2O. The catalysed reaction is (9Z,12Z)-octadecadienoate + AH2 + O2 = (13S)-hydroxy-(9Z,11E)-octadecadienoate + A + H2O. The enzyme catalyses (9Z,12Z)-octadecadienoate + AH2 + O2 = (13R)-hydroxy-(9Z,11E)-octadecadienoate + A + H2O. Its pathway is lipid metabolism; prostaglandin biosynthesis. The cyclooxygenase activity is inhibited by nonsteroidal anti-inflammatory drugs (NSAIDs) including ibuprofen, flurbiprofen, ketoprofen, naproxen, flurbiprofen, anirolac, fenclofenac and diclofenac. Functionally, dual cyclooxygenase and peroxidase that plays an important role in the biosynthesis pathway of prostanoids, a class of C20 oxylipins mainly derived from arachidonate ((5Z,8Z,11Z,14Z)-eicosatetraenoate, AA, C20:4(n-6)), with a particular role in the inflammatory response. The cyclooxygenase activity oxygenates AA to the hydroperoxy endoperoxide prostaglandin G2 (PGG2), and the peroxidase activity reduces PGG2 to the hydroxy endoperoxide prostaglandin H2 (PGH2), the precursor of all 2-series prostaglandins and thromboxanes. This complex transformation is initiated by abstraction of hydrogen at carbon 13 (with S-stereochemistry), followed by insertion of molecular O2 to form the endoperoxide bridge between carbon 9 and 11 that defines prostaglandins. The insertion of a second molecule of O2 (bis-oxygenase activity) yields a hydroperoxy group in PGG2 that is then reduced to PGH2 by two electrons. Involved in the constitutive production of prostanoids in particular in the stomach and platelets. In gastric epithelial cells, it is a key step in the generation of prostaglandins, such as prostaglandin E2 (PGE2), which plays an important role in cytoprotection. In platelets, it is involved in the generation of thromboxane A2 (TXA2), which promotes platelet activation and aggregation, vasoconstriction and proliferation of vascular smooth muscle cells. Can also use linoleate (LA, (9Z,12Z)-octadecadienoate, C18:2(n-6)) as substrate and produce hydroxyoctadecadienoates (HODEs) in a regio- and stereospecific manner, being (9R)-HODE ((9R)-hydroxy-(10E,12Z)-octadecadienoate) and (13S)-HODE ((13S)-hydroxy-(9Z,11E)-octadecadienoate) its major products. This is Prostaglandin G/H synthase 1 (PTGS1) from Bos taurus (Bovine).